Here is a 711-residue protein sequence, read N- to C-terminus: Denticleless protein homolog B (711 aa).

WD repeat units lie at residues G47 to L89, A96 to E135, and G138 to F178. A DDB1-binding motif motif is present at residues W168–R171. A Nuclear localization signal motif is present at residues P197–K204. 4 WD repeats span residues D215–R254, T270–V309, G314–I355, and G359–S398. A DDB1-binding motif motif is present at residues W244–R247. 2 disordered regions span residues Q473 to P524 and E601 to S698. Composition is skewed to polar residues over residues T504–P516 and L606–P627. The segment covering M631–S642 has biased composition (basic and acidic residues). A compositionally biased stretch (low complexity) spans D658–S675. Positions N684 to G697 are enriched in polar residues.

This sequence belongs to the WD repeat cdt2 family. In terms of assembly, component of the DCX(DTL) E3 ubiquitin ligase complex, at least composed of cul4 (cul4a or cul4b), ddb1, dtl/cdt2 and rbx1.

It is found in the nucleus. The protein localises to the cytoplasm. The protein resides in the cytoskeleton. Its subcellular location is the microtubule organizing center. It localises to the centrosome. It is found in the chromosome. It functions in the pathway protein modification; protein ubiquitination. In terms of biological role, substrate-specific adapter of a DCX (DDB1-CUL4-X-box) E3 ubiquitin-protein ligase complex required for cell cycle control, DNA damage response and translesion DNA synthesis. The DCX(DTL) complex, also named CRL4(CDT2) complex, mediates the polyubiquitination and subsequent degradation of CDT1, CDKN1A/p21(CIP1), KMT5A and SDE2. CDT1 degradation in response to DNA damage is necessary to ensure proper cell cycle regulation of DNA replication. CDKN1A/p21(CIP1) degradation during S phase or following UV irradiation is essential to control replication licensing. KMT5A degradation is also important for a proper regulation of mechanisms such as TGF-beta signaling, cell cycle progression, DNA repair and cell migration. Most substrates require their interaction with PCNA for their polyubiquitination: substrates interact with PCNA via their PIP-box, and those containing the 'K+4' motif in the PIP box, recruit the DCX(DTL) complex, leading to their degradation. In undamaged proliferating cells, the DCX(DTL) complex also promotes the 'Lys-164' monoubiquitination of PCNA, thereby being involved in PCNA-dependent translesion DNA synthesis. May play a role in the regulation of the circadian clock. The chain is Denticleless protein homolog B (dtl-b) from Xenopus laevis (African clawed frog).